The primary structure comprises 285 residues: Bifunctional protein FolD (285 aa).

Residues 165–167 and Ser-190 each bind NADP(+); that span reads GRS.

It belongs to the tetrahydrofolate dehydrogenase/cyclohydrolase family. In terms of assembly, homodimer.

The enzyme catalyses (6R)-5,10-methylene-5,6,7,8-tetrahydrofolate + NADP(+) = (6R)-5,10-methenyltetrahydrofolate + NADPH. It carries out the reaction (6R)-5,10-methenyltetrahydrofolate + H2O = (6R)-10-formyltetrahydrofolate + H(+). It functions in the pathway one-carbon metabolism; tetrahydrofolate interconversion. Catalyzes the oxidation of 5,10-methylenetetrahydrofolate to 5,10-methenyltetrahydrofolate and then the hydrolysis of 5,10-methenyltetrahydrofolate to 10-formyltetrahydrofolate. This Burkholderia orbicola (strain AU 1054) protein is Bifunctional protein FolD.